A 247-amino-acid chain; its full sequence is 1-(5-phosphoribosyl)-5-[(5-phosphoribosylamino)methylideneamino] imidazole-4-carboxamide isomerase (247 aa).

The active-site Proton acceptor is the D8. The active-site Proton donor is the D129.

It belongs to the HisA/HisF family.

It localises to the cytoplasm. It catalyses the reaction 1-(5-phospho-beta-D-ribosyl)-5-[(5-phospho-beta-D-ribosylamino)methylideneamino]imidazole-4-carboxamide = 5-[(5-phospho-1-deoxy-D-ribulos-1-ylimino)methylamino]-1-(5-phospho-beta-D-ribosyl)imidazole-4-carboxamide. Its pathway is amino-acid biosynthesis; L-histidine biosynthesis; L-histidine from 5-phospho-alpha-D-ribose 1-diphosphate: step 4/9. This Bradyrhizobium sp. (strain BTAi1 / ATCC BAA-1182) protein is 1-(5-phosphoribosyl)-5-[(5-phosphoribosylamino)methylideneamino] imidazole-4-carboxamide isomerase.